Reading from the N-terminus, the 122-residue chain is MKQLGKHIILELWGCEKQALDDQPGVEKMLVNAVKACGATLICVKTHKFSPQGVTGVAVLAESHISIHTWPELGYAAMDVFTCGEHVIPEDTIPEIRNFLKPDKVEVIDIKRGIVDIEEVLA.

Ser-63 serves as the catalytic Schiff-base intermediate with substrate; via pyruvic acid. Pyruvic acid (Ser); by autocatalysis is present on Ser-63. His-68 acts as the Proton acceptor; for processing activity in catalysis. The active-site Proton donor; for catalytic activity is the Cys-83.

Belongs to the prokaryotic AdoMetDC family. Type 1 subfamily. Heterotetramer of two alpha and two beta chains arranged as a dimer of alpha/beta heterodimers. The cofactor is pyruvate. Post-translationally, is synthesized initially as an inactive proenzyme. Formation of the active enzyme involves a self-maturation process in which the active site pyruvoyl group is generated from an internal serine residue via an autocatalytic post-translational modification. Two non-identical subunits are generated from the proenzyme in this reaction, and the pyruvate is formed at the N-terminus of the alpha chain, which is derived from the carboxyl end of the proenzyme. The post-translation cleavage follows an unusual pathway, termed non-hydrolytic serinolysis, in which the side chain hydroxyl group of the serine supplies its oxygen atom to form the C-terminus of the beta chain, while the remainder of the serine residue undergoes an oxidative deamination to produce ammonia and the pyruvoyl group blocking the N-terminus of the alpha chain.

It catalyses the reaction S-adenosyl-L-methionine + H(+) = S-adenosyl 3-(methylsulfanyl)propylamine + CO2. It functions in the pathway amine and polyamine biosynthesis; S-adenosylmethioninamine biosynthesis; S-adenosylmethioninamine from S-adenosyl-L-methionine: step 1/1. Catalyzes the decarboxylation of S-adenosylmethionine to S-adenosylmethioninamine (dcAdoMet), the propylamine donor required for the synthesis of the polyamines spermine and spermidine from the diamine putrescine. In Methanococcus vannielii (strain ATCC 35089 / DSM 1224 / JCM 13029 / OCM 148 / SB), this protein is S-adenosylmethionine decarboxylase proenzyme.